We begin with the raw amino-acid sequence, 119 residues long: MRHYEIVFMVHPDQSDQVPAMVERYRSIVESSGGTVHRLEDWGRRQLAYPINKLIKAHYVLMNVECGKDELDELTSAFRFNDAVIRNMVLSRDEAVTEPSPLAKGNEKREDRKESEDAE.

The disordered stretch occupies residues 95 to 119; sequence AVTEPSPLAKGNEKREDRKESEDAE. Positions 105–119 are enriched in basic and acidic residues; that stretch reads GNEKREDRKESEDAE.

Belongs to the bacterial ribosomal protein bS6 family.

In terms of biological role, binds together with bS18 to 16S ribosomal RNA. In Halorhodospira halophila (strain DSM 244 / SL1) (Ectothiorhodospira halophila (strain DSM 244 / SL1)), this protein is Small ribosomal subunit protein bS6.